The primary structure comprises 336 residues: Ketol-acid reductoisomerase (NADP(+)) 1 (336 aa).

Positions 2–181 constitute a KARI N-terminal Rossmann domain; it reads AKVYYEKDVT…GATRAGVLET (180 aa). NADP(+)-binding positions include 25–28, R48, S52, and 82–85; these read YGSQ and DELQ. Residue H107 is part of the active site. G133 is an NADP(+) binding site. The region spanning 182–327 is the KARI C-terminal knotted domain; sequence TFKEETETDL…RKLREMMPFV (146 aa). Residues D190, E194, E226, and E230 each contribute to the Mg(2+) site. S251 contacts substrate.

Belongs to the ketol-acid reductoisomerase family. Mg(2+) is required as a cofactor.

It carries out the reaction (2R)-2,3-dihydroxy-3-methylbutanoate + NADP(+) = (2S)-2-acetolactate + NADPH + H(+). It catalyses the reaction (2R,3R)-2,3-dihydroxy-3-methylpentanoate + NADP(+) = (S)-2-ethyl-2-hydroxy-3-oxobutanoate + NADPH + H(+). Its pathway is amino-acid biosynthesis; L-isoleucine biosynthesis; L-isoleucine from 2-oxobutanoate: step 2/4. The protein operates within amino-acid biosynthesis; L-valine biosynthesis; L-valine from pyruvate: step 2/4. Its function is as follows. Involved in the biosynthesis of branched-chain amino acids (BCAA). Catalyzes an alkyl-migration followed by a ketol-acid reduction of (S)-2-acetolactate (S2AL) to yield (R)-2,3-dihydroxy-isovalerate. In the isomerase reaction, S2AL is rearranged via a Mg-dependent methyl migration to produce 3-hydroxy-3-methyl-2-ketobutyrate (HMKB). In the reductase reaction, this 2-ketoacid undergoes a metal-dependent reduction by NADPH to yield (R)-2,3-dihydroxy-isovalerate. The protein is Ketol-acid reductoisomerase (NADP(+)) 1 of Bacillus cereus (strain ATCC 10987 / NRS 248).